Reading from the N-terminus, the 632-residue chain is Pheromone-processing carboxypeptidase kex1 (632 aa).

Positions 1 to 38 (MLLTTPSSRGSRAQSGIANVSWLALSLLLLFSPTLGSA) are cleaved as a signal peptide. The Lumenal portion of the chain corresponds to 39–523 (KSAADYYVRS…KETEWKAYAK (485 aa)). Residues Asn119 and Asn126 are each glycosylated (N-linked (GlcNAc...) asparagine). Residues Ser190 and Asp390 contribute to the active site. Residues Asn441 and Asn449 are each glycosylated (N-linked (GlcNAc...) asparagine). His452 is an active-site residue. The segment at 480-509 (KPADSRIDGEKLPQTSVGGHPNSTAAEQQA) is disordered. A compositionally biased stretch (polar residues) spans 492 to 506 (PQTSVGGHPNSTAAE). Asn501 carries an N-linked (GlcNAc...) asparagine glycan. A helical membrane pass occupies residues 524-544 (SGEAALIVVIIGVTVWGFFIW). The Cytoplasmic portion of the chain corresponds to 545–632 (RSRRRNRGYQ…SSTKPGGAQP (88 aa)). The disordered stretch occupies residues 574 to 632 (RSGPADVEAGDFDESELDNLHSPGLEQEHYAVGDDSDEESPNHQPAAPPSSTKPGGAQP). Positions 581 to 590 (EAGDFDESEL) are enriched in acidic residues.

This sequence belongs to the peptidase S10 family.

The protein resides in the golgi apparatus. The protein localises to the trans-Golgi network membrane. It carries out the reaction Preferential release of a C-terminal arginine or lysine residue.. Functionally, protease with a carboxypeptidase B-like function involved in the C-terminal processing of the lysine and arginine residues from protein precursors. Promotes cell fusion and is involved in the programmed cell death. This Aspergillus fumigatus (strain CBS 144.89 / FGSC A1163 / CEA10) (Neosartorya fumigata) protein is Pheromone-processing carboxypeptidase kex1 (kex1).